The chain runs to 137 residues: Nucleoside diphosphate kinase (137 aa).

Residues Lys10, Phe58, Arg86, Thr92, Arg103, and Asn113 each coordinate ATP. The Pros-phosphohistidine intermediate role is filled by His116.

It belongs to the NDK family. Homotetramer. Mg(2+) is required as a cofactor.

The protein resides in the cytoplasm. The enzyme catalyses a 2'-deoxyribonucleoside 5'-diphosphate + ATP = a 2'-deoxyribonucleoside 5'-triphosphate + ADP. It catalyses the reaction a ribonucleoside 5'-diphosphate + ATP = a ribonucleoside 5'-triphosphate + ADP. Functionally, major role in the synthesis of nucleoside triphosphates other than ATP. The ATP gamma phosphate is transferred to the NDP beta phosphate via a ping-pong mechanism, using a phosphorylated active-site intermediate. The chain is Nucleoside diphosphate kinase from Helicobacter pylori (strain P12).